The following is a 436-amino-acid chain: 3-ketoacyl-CoA thiolase (436 aa).

Catalysis depends on cysteine 99, which acts as the Acyl-thioester intermediate. Active-site proton acceptor residues include histidine 392 and cysteine 422.

It belongs to the thiolase-like superfamily. Thiolase family. As to quaternary structure, heterotetramer of two alpha chains (FadJ) and two beta chains (FadI).

The protein resides in the cytoplasm. The enzyme catalyses an acyl-CoA + acetyl-CoA = a 3-oxoacyl-CoA + CoA. The protein operates within lipid metabolism; fatty acid beta-oxidation. Its function is as follows. Catalyzes the final step of fatty acid oxidation in which acetyl-CoA is released and the CoA ester of a fatty acid two carbons shorter is formed. This Shewanella sp. (strain ANA-3) protein is 3-ketoacyl-CoA thiolase.